The following is a 141-amino-acid chain: Nucleoside triphosphatase NudI (141 aa).

Positions 1–141 (MRQRTIVCPL…RKTLRLKGLL (141 aa)) constitute a Nudix hydrolase domain. Residues 38–59 (GGVEPGERIEEALRREIREELG) carry the Nudix box motif.

This sequence belongs to the Nudix hydrolase family. NudI subfamily. In terms of assembly, monomer. It depends on Mg(2+) as a cofactor.

It carries out the reaction a ribonucleoside 5'-triphosphate + H2O = a ribonucleoside 5'-phosphate + diphosphate + H(+). It catalyses the reaction a 2'-deoxyribonucleoside 5'-triphosphate + H2O = a 2'-deoxyribonucleoside 5'-phosphate + diphosphate + H(+). The catalysed reaction is dUTP + H2O = dUMP + diphosphate + H(+). The enzyme catalyses dTTP + H2O = dTMP + diphosphate + H(+). It carries out the reaction dCTP + H2O = dCMP + diphosphate + H(+). Catalyzes the hydrolysis of nucleoside triphosphates, with a preference for pyrimidine deoxynucleoside triphosphates (dUTP, dTTP and dCTP). This chain is Nucleoside triphosphatase NudI, found in Escherichia coli O17:K52:H18 (strain UMN026 / ExPEC).